The sequence spans 458 residues: Biphenyl dioxygenase subunit alpha (458 aa).

Positions W58–A156 constitute a Rieske domain. The [2Fe-2S] cluster site is built by C100, H102, C120, and H123. Residues H233 and H239 each contribute to the Fe cation site.

It belongs to the bacterial ring-hydroxylating dioxygenase alpha subunit family. In terms of assembly, heterohexamer consisting of three BphA subunits and three BphE subunits. A ferredoxin (BphF) and a ferredoxin reductase (BphG) must be present to obtain activity. [2Fe-2S] cluster serves as cofactor. Requires Fe cation as cofactor.

The enzyme catalyses biphenyl + NADH + O2 + H(+) = (2R,3S)-3-phenylcyclohexa-3,5-diene-1,2-diol + NAD(+). The protein operates within xenobiotic degradation; biphenyl degradation; 2-hydroxy-2,4-pentadienoate and benzoate from biphenyl: step 1/4. The chain is Biphenyl dioxygenase subunit alpha (bphA) from Metapseudomonas furukawaii (Pseudomonas furukawaii).